A 424-amino-acid chain; its full sequence is Lipoamide acyltransferase component of branched-chain alpha-keto acid dehydrogenase complex (424 aa).

One can recognise a Lipoyl-binding domain in the interval 3–78; the sequence is IEQMTMPQLG…QVGEMICKIE (76 aa). An N6-lipoyllysine modification is found at Lys-44. Residues 82–115 form a disordered region; the sequence is ANPAEQKQEQPAASEAAENPVAKSAGAADQPNKK. The Peripheral subunit-binding (PSBD) domain occupies 116–153; it reads RYSPAVLRLAGEHGIDLDQVTGTGAGGRITRKDIQRLI. The segment at 154–193 is disordered; that stretch reads ETGGVQEQNPEELKTAAPAPKSASKPEPKEETSYPASAAG. Catalysis depends on residues His-395 and Asp-399.

It belongs to the 2-oxoacid dehydrogenase family. Forms a 24-polypeptide structural core with octahedral symmetry. (R)-lipoate is required as a cofactor.

It carries out the reaction N(6)-[(R)-dihydrolipoyl]-L-lysyl-[protein] + 2-methylpropanoyl-CoA = N(6)-[(R)-S(8)-2-methylpropanoyldihydrolipoyl]-L-lysyl-[protein] + CoA. The branched-chain alpha-keto dehydrogenase complex catalyzes the overall conversion of alpha-keto acids to acyl-CoA and CO(2). It contains multiple copies of three enzymatic components: branched-chain alpha-keto acid decarboxylase (E1), lipoamide acyltransferase (E2) and lipoamide dehydrogenase (E3). The sequence is that of Lipoamide acyltransferase component of branched-chain alpha-keto acid dehydrogenase complex (bfmBB) from Bacillus subtilis (strain 168).